A 173-amino-acid chain; its full sequence is CASP-like protein 2D1 (173 aa).

The Cytoplasmic portion of the chain corresponds to 1–9 (MAPLLKLLD). The chain crosses the membrane as a helical span at residues 10 to 29 (SSLRVSVIPLSAATIWLTVT). Residues 30–50 (NHQDNSSYGNLKYSNIMGLKY) lie on the Extracellular side of the membrane. Residue Asn-34 is glycosylated (N-linked (GlcNAc...) asparagine). A helical membrane pass occupies residues 51 to 71 (MVCISAICASYAFVAAVSIWI). Residues 72 to 86 (KCLVNKVWLFFVSDQ) are Cytoplasmic-facing. The chain crosses the membrane as a helical span at residues 87–107 (IIAYLMVTSVAAAMEILYIAY). The Extracellular segment spans residues 108–131 (NGDQKVTWSEACTSYGKFCNGMKT). Residues 132 to 152 (ALILHALTLCFFIVLAVISAY) traverse the membrane as a helical segment. At 153–173 (RAFSMYQPPVSSKETVEGDAT) the chain is on the cytoplasmic side.

The protein belongs to the Casparian strip membrane proteins (CASP) family. Homodimer and heterodimers.

The protein localises to the cell membrane. The protein is CASP-like protein 2D1 of Ricinus communis (Castor bean).